A 680-amino-acid chain; its full sequence is DNA-directed RNA polymerase subunit beta' (680 aa).

Cysteine 69, cysteine 71, cysteine 87, and cysteine 90 together coordinate Zn(2+). Residues aspartate 489, aspartate 491, and aspartate 493 each coordinate Mg(2+).

The protein belongs to the RNA polymerase beta' chain family. RpoC1 subfamily. In terms of assembly, in plastids the minimal PEP RNA polymerase catalytic core is composed of four subunits: alpha, beta, beta', and beta''. When a (nuclear-encoded) sigma factor is associated with the core the holoenzyme is formed, which can initiate transcription. It depends on Mg(2+) as a cofactor. Zn(2+) serves as cofactor.

The protein localises to the plastid. Its subcellular location is the chloroplast. It catalyses the reaction RNA(n) + a ribonucleoside 5'-triphosphate = RNA(n+1) + diphosphate. In terms of biological role, DNA-dependent RNA polymerase catalyzes the transcription of DNA into RNA using the four ribonucleoside triphosphates as substrates. This Citrus sinensis (Sweet orange) protein is DNA-directed RNA polymerase subunit beta'.